The sequence spans 376 residues: Alanine racemase (376 aa).

The Proton acceptor; specific for D-alanine role is filled by Lys40. Residue Lys40 is modified to N6-(pyridoxal phosphate)lysine. Arg138 serves as a coordination point for substrate. The active-site Proton acceptor; specific for L-alanine is Tyr270. Met317 contacts substrate.

The protein belongs to the alanine racemase family. It depends on pyridoxal 5'-phosphate as a cofactor.

It carries out the reaction L-alanine = D-alanine. The protein operates within amino-acid biosynthesis; D-alanine biosynthesis; D-alanine from L-alanine: step 1/1. Its function is as follows. Catalyzes the interconversion of L-alanine and D-alanine. May also act on other amino acids. In Lactobacillus delbrueckii subsp. bulgaricus (strain ATCC BAA-365 / Lb-18), this protein is Alanine racemase (alr).